Here is a 316-residue protein sequence, read N- to C-terminus: Olfactory receptor 2T11 (316 aa).

The Extracellular segment spans residues 1–22 (MTNTSSSDFTLLGLLVNSEAAG). N-linked (GlcNAc...) asparagine glycosylation occurs at Asn3. Residues 23-46 (IVFTVILAVFLGAVTANLVMIFLI) form a helical membrane-spanning segment. Topologically, residues 47-54 (QVDSRLHT) are cytoplasmic. Residues 55–76 (PMYFLLSQLSIMDTLFICTTVP) traverse the membrane as a helical segment. At 77 to 97 (KLLADMVSKEKIISFVACGIQ) the chain is on the extracellular side. Cys94 and Cys186 are joined by a disulfide. Residues 98–117 (IFLYLTMIGSEFFLLGLMAY) traverse the membrane as a helical segment. Topologically, residues 118-136 (DCYVAVCNPLRYPVLMNRK) are cytoplasmic. The chain crosses the membrane as a helical span at residues 137-155 (KCLLLAAGAWFGGSLDGFL). Over 156–192 (LTPITMNVPYCGSRSINHFFCEIPAVLKLACADTSLY) the chain is Extracellular. A helical membrane pass occupies residues 193–216 (ETLMYICCVLMLLIPISIISTSYS). The Cytoplasmic segment spans residues 217-233 (LILLTIHRMPSAEGRKK). Residues 234–256 (AFTTCSSHLTVVSIFYGAAFYTY) traverse the membrane as a helical segment. Topologically, residues 257-269 (VLPQSFHTPEQDK) are extracellular. Residues 270–289 (VVSAFYTIVTPMLNPLIYSL) traverse the membrane as a helical segment. The Cytoplasmic portion of the chain corresponds to 290–316 (RNKDVIGAFKKVFACCSSAQKVATSDA).

The protein belongs to the G-protein coupled receptor 1 family.

Its subcellular location is the cell membrane. Functionally, odorant receptor. The polypeptide is Olfactory receptor 2T11 (OR2T11) (Homo sapiens (Human)).